The primary structure comprises 350 residues: Xylene/toluene monooxygenase electron transfer component XylA (350 aa).

Residues 16-108 form the 2Fe-2S ferredoxin-type domain; it reads PESTVSVRGQ…DLEIELDTVL (93 aa). C52, C57, C60, and C92 together coordinate [2Fe-2S] cluster. Positions 109–350 are ferredoxin--NADH reductase; the sequence is GQALVPIETS…ADRFYNRPPC (242 aa). Positions 114 to 213 constitute an FAD-binding FR-type domain; sequence PIETSALISK…RAPYGQFGLH (100 aa).

This sequence belongs to the bacterial ring-hydroxylating dioxygenase ferredoxin reductase family. Monomer. The xylene/toluene monooxygenase is composed of two subunits: the electron transfer component XylA and the hydroxylase component XylM. It depends on FAD as a cofactor. [2Fe-2S] cluster serves as cofactor.

The protein localises to the cell inner membrane. It catalyses the reaction 2 reduced [2Fe-2S]-[ferredoxin] + NAD(+) + H(+) = 2 oxidized [2Fe-2S]-[ferredoxin] + NADH. Its activity is regulated as follows. The reductase activity is completely inhibited by quercetin (a common inhibitor of mammalian oxidoreductases) and p-chloromercuribenzoate, but not by iodoacetimide, N-ethylmaleimide and pyrrazole. Component of a monooxygenase that catalyzes the first step in the degradation of xylenes and toluenes. XylA is responsible for the transport of electrons from the electron donor NADH to the terminal hydroxylase component, XylM. The protein is Xylene/toluene monooxygenase electron transfer component XylA of Pseudomonas putida (Arthrobacter siderocapsulatus).